The chain runs to 159 residues: Ribosome-binding factor A (159 aa).

The segment at 127–159 (TYAGEADPYRRPAVDDAGDSADDADPAEDERPS) is disordered. Acidic residues predominate over residues 142–159 (DAGDSADDADPAEDERPS).

This sequence belongs to the RbfA family. In terms of assembly, monomer. Binds 30S ribosomal subunits, but not 50S ribosomal subunits or 70S ribosomes.

It localises to the cytoplasm. In terms of biological role, one of several proteins that assist in the late maturation steps of the functional core of the 30S ribosomal subunit. Associates with free 30S ribosomal subunits (but not with 30S subunits that are part of 70S ribosomes or polysomes). Required for efficient processing of 16S rRNA. May interact with the 5'-terminal helix region of 16S rRNA. The sequence is that of Ribosome-binding factor A from Beutenbergia cavernae (strain ATCC BAA-8 / DSM 12333 / CCUG 43141 / JCM 11478 / NBRC 16432 / NCIMB 13614 / HKI 0122).